Consider the following 174-residue polypeptide: Translation initiation factor IF-3 (174 aa).

It belongs to the IF-3 family. As to quaternary structure, monomer.

The protein localises to the cytoplasm. In terms of biological role, IF-3 binds to the 30S ribosomal subunit and shifts the equilibrium between 70S ribosomes and their 50S and 30S subunits in favor of the free subunits, thus enhancing the availability of 30S subunits on which protein synthesis initiation begins. The protein is Translation initiation factor IF-3 of Helicobacter hepaticus (strain ATCC 51449 / 3B1).